A 741-amino-acid polypeptide reads, in one-letter code: Condensin complex subunit 2 (741 aa).

The interval 1–67 (MGPPGPALPA…NDDEKERLQR (67 aa)) is disordered. Phosphoserine occurs at positions 15, 25, and 28. Residue T49 is modified to Phosphothreonine. A phosphoserine mark is found at S70, S78, S81, S87, S89, S92, S96, S201, and S233. The segment covering 361–377 (CGDFPDGSLGDDFDAND) has biased composition (acidic residues). Residues 361 to 383 (CGDFPDGSLGDDFDANDEPDHTA) form a disordered region. S432 carries the post-translational modification Phosphoserine. The tract at residues 447 to 467 (FRPRRKQDAPSQSENKKKSTK) is disordered. A Glycyl lysine isopeptide (Lys-Gly) (interchain with G-Cter in SUMO2) cross-link involves residue K488. The residue at position 496 (S496) is a Phosphoserine. 2 positions are modified to phosphothreonine: T598 and T605. An N6-acetyllysine modification is found at K637.

This sequence belongs to the CND2 (condensin subunit 2) family. As to quaternary structure, component of the condensin complex, which contains the SMC2 and SMC4 heterodimer, and three non SMC subunits that probably regulate the complex: NCAPH/BRRN1, NCAPD2/CAPD2 and NCAPG. Post-translationally, phosphorylated by CDK1. Its phosphorylation, as well as that of NCAPD2 and NCAPG subunits, activates the condensin complex and is required for chromosome condensation. As to expression, widely expressed at low level. Expressed in proliferating cells.

The protein localises to the nucleus. The protein resides in the cytoplasm. It localises to the chromosome. In terms of biological role, regulatory subunit of the condensin complex, a complex required for conversion of interphase chromatin into mitotic-like condense chromosomes. The condensin complex probably introduces positive supercoils into relaxed DNA in the presence of type I topoisomerases and converts nicked DNA into positive knotted forms in the presence of type II topoisomerases. Early in neurogenesis, may play an essential role to ensure accurate mitotic chromosome condensation in neuron stem cells, ultimately affecting neuron pool and cortex size. In Homo sapiens (Human), this protein is Condensin complex subunit 2.